Reading from the N-terminus, the 531-residue chain is Cytochrome c oxidase subunit 1 (531 aa).

A helical membrane pass occupies residues 18–38 (ILYLIYGMVSAMVATGMSVII). E41 and G46 together coordinate Ca(2+). A run of 6 helical transmembrane segments spans residues 59-79 (VLVT…ILIG), 103-123 (ISFW…LIET), 149-169 (AIFA…NFIV), 185-205 (PLFV…LPVL), 237-257 (LFYF…FGII), and 269-289 (IFGQ…GFLV). Residue H64 coordinates Fe(II)-heme a. A Cu cation-binding site is contributed by H243. The segment at residues 243–247 (HPEVY) is a cross-link (1'-histidyl-3'-tyrosine (His-Tyr)). Y247 serves as a coordination point for O2. Cu cation-binding residues include H292 and H293. The next 2 helical transmembrane spans lie at 312–332 (MVIA…LYGG) and 340–360 (MLFA…GVML). The Mg(2+) site is built by H370 and D371. H378 contributes to the heme a3 binding site. A Fe(II)-heme a-binding site is contributed by H380. The next 2 membrane-spanning stretches (helical) occupy residues 385-405 (MGAL…MFGL) and 414-434 (VHYW…HFLG). Residue P443 coordinates Ca(2+). Residues 458-478 (WGSIMSVISVLIGLYSVLVQL) traverse the membrane as a helical segment.

The protein belongs to the heme-copper respiratory oxidase family. As to quaternary structure, component of the cytochrome c oxidase (complex IV, CIV), a multisubunit enzyme composed of a catalytic core of 3 subunits and several supernumerary subunits. The complex exists as a monomer or a dimer and forms supercomplexes (SCs) in the inner mitochondrial membrane with ubiquinol-cytochrome c oxidoreductase (cytochrome b-c1 complex, complex III, CIII). It depends on heme as a cofactor. Cu cation is required as a cofactor.

Its subcellular location is the mitochondrion inner membrane. The catalysed reaction is 4 Fe(II)-[cytochrome c] + O2 + 8 H(+)(in) = 4 Fe(III)-[cytochrome c] + 2 H2O + 4 H(+)(out). Its pathway is energy metabolism; oxidative phosphorylation. Its function is as follows. Component of the cytochrome c oxidase, the last enzyme in the mitochondrial electron transport chain which drives oxidative phosphorylation. The respiratory chain contains 3 multisubunit complexes succinate dehydrogenase (complex II, CII), ubiquinol-cytochrome c oxidoreductase (cytochrome b-c1 complex, complex III, CIII) and cytochrome c oxidase (complex IV, CIV), that cooperate to transfer electrons derived from NADH and succinate to molecular oxygen, creating an electrochemical gradient over the inner membrane that drives transmembrane transport and the ATP synthase. Cytochrome c oxidase is the component of the respiratory chain that catalyzes the reduction of oxygen to water. Electrons originating from reduced cytochrome c in the intermembrane space (IMS) are transferred via the dinuclear copper A center (CU(A)) of subunit 2 and heme A of subunit 1 to the active site in subunit 1, a binuclear center (BNC) formed by heme A3 and copper B (CU(B)). The BNC reduces molecular oxygen to 2 water molecules using 4 electrons from cytochrome c in the IMS and 4 protons from the mitochondrial matrix. This is Cytochrome c oxidase subunit 1 (COX1) from Candida albicans (strain SC5314 / ATCC MYA-2876) (Yeast).